The primary structure comprises 352 residues: Adenosine deaminase (352 aa).

Positions 24 and 26 each coordinate Zn(2+). Residues His26, Asp28, and Gly181 each contribute to the substrate site. Position 208 (His208) interacts with Zn(2+). The active-site Proton donor is the Glu211. Zn(2+) is bound at residue Asp290.

Belongs to the metallo-dependent hydrolases superfamily. Adenosine and AMP deaminases family. Adenosine deaminase subfamily. Zn(2+) serves as cofactor.

The enzyme catalyses adenosine + H2O + H(+) = inosine + NH4(+). It catalyses the reaction 2'-deoxyadenosine + H2O + H(+) = 2'-deoxyinosine + NH4(+). Catalyzes the hydrolytic deamination of adenosine and 2-deoxyadenosine. This is Adenosine deaminase from Lactococcus lactis subsp. lactis (strain IL1403) (Streptococcus lactis).